Consider the following 124-residue polypeptide: Small ribosomal subunit protein bS6 (124 aa).

This sequence belongs to the bacterial ribosomal protein bS6 family.

Its function is as follows. Binds together with bS18 to 16S ribosomal RNA. This chain is Small ribosomal subunit protein bS6, found in Bordetella avium (strain 197N).